The primary structure comprises 108 residues: Nucleoid-associated protein Lcho_1975 (108 aa).

It belongs to the YbaB/EbfC family. As to quaternary structure, homodimer.

The protein resides in the cytoplasm. The protein localises to the nucleoid. In terms of biological role, binds to DNA and alters its conformation. May be involved in regulation of gene expression, nucleoid organization and DNA protection. This chain is Nucleoid-associated protein Lcho_1975, found in Leptothrix cholodnii (strain ATCC 51168 / LMG 8142 / SP-6) (Leptothrix discophora (strain SP-6)).